A 316-amino-acid chain; its full sequence is Glycerol-3-phosphate dehydrogenase [NAD(P)+] (316 aa).

4 residues coordinate NADPH: Ser-14, Phe-15, Arg-35, and Lys-109. Lys-109 and Gly-137 together coordinate sn-glycerol 3-phosphate. Ala-141 is a binding site for NADPH. Sn-glycerol 3-phosphate contacts are provided by Lys-192, Asp-248, Ser-258, Arg-259, and Asn-260. Lys-192 (proton acceptor) is an active-site residue. Residue Arg-259 coordinates NADPH. 2 residues coordinate NADPH: Leu-283 and Glu-285.

The protein belongs to the NAD-dependent glycerol-3-phosphate dehydrogenase family.

The protein resides in the cytoplasm. The catalysed reaction is sn-glycerol 3-phosphate + NAD(+) = dihydroxyacetone phosphate + NADH + H(+). It carries out the reaction sn-glycerol 3-phosphate + NADP(+) = dihydroxyacetone phosphate + NADPH + H(+). It functions in the pathway membrane lipid metabolism; glycerophospholipid metabolism. In terms of biological role, catalyzes the reduction of the glycolytic intermediate dihydroxyacetone phosphate (DHAP) to sn-glycerol 3-phosphate (G3P), the key precursor for phospholipid synthesis. This Rickettsia prowazekii (strain Madrid E) protein is Glycerol-3-phosphate dehydrogenase [NAD(P)+].